Consider the following 84-residue polypeptide: Large ribosomal subunit protein bL27 (84 aa).

The segment at 1-22 is disordered; it reads MAHKKAGGSTRNGRDSESKRLG.

It belongs to the bacterial ribosomal protein bL27 family.

This Shewanella denitrificans (strain OS217 / ATCC BAA-1090 / DSM 15013) protein is Large ribosomal subunit protein bL27.